A 178-amino-acid chain; its full sequence is Adenine phosphoribosyltransferase (178 aa).

This sequence belongs to the purine/pyrimidine phosphoribosyltransferase family. In terms of assembly, homodimer.

Its subcellular location is the cytoplasm. The enzyme catalyses AMP + diphosphate = 5-phospho-alpha-D-ribose 1-diphosphate + adenine. Its pathway is purine metabolism; AMP biosynthesis via salvage pathway; AMP from adenine: step 1/1. Functionally, catalyzes a salvage reaction resulting in the formation of AMP, that is energically less costly than de novo synthesis. The chain is Adenine phosphoribosyltransferase from Helicobacter hepaticus (strain ATCC 51449 / 3B1).